A 316-amino-acid polypeptide reads, in one-letter code: Thymidylate synthase (316 aa).

DUMP is bound by residues arginine 23 and 178-179 (RR). The active-site Nucleophile is cysteine 198. DUMP-binding positions include 218–221 (RSGD), asparagine 229, and 259–261 (HIY). Residue aspartate 221 participates in (6R)-5,10-methylene-5,6,7,8-tetrahydrofolate binding. Alanine 315 is a (6R)-5,10-methylene-5,6,7,8-tetrahydrofolate binding site.

It belongs to the thymidylate synthase family. Bacterial-type ThyA subfamily. Homodimer.

Its subcellular location is the cytoplasm. The catalysed reaction is dUMP + (6R)-5,10-methylene-5,6,7,8-tetrahydrofolate = 7,8-dihydrofolate + dTMP. It participates in pyrimidine metabolism; dTTP biosynthesis. Catalyzes the reductive methylation of 2'-deoxyuridine-5'-monophosphate (dUMP) to 2'-deoxythymidine-5'-monophosphate (dTMP) while utilizing 5,10-methylenetetrahydrofolate (mTHF) as the methyl donor and reductant in the reaction, yielding dihydrofolate (DHF) as a by-product. This enzymatic reaction provides an intracellular de novo source of dTMP, an essential precursor for DNA biosynthesis. The sequence is that of Thymidylate synthase from Lactiplantibacillus plantarum (strain ATCC BAA-793 / NCIMB 8826 / WCFS1) (Lactobacillus plantarum).